We begin with the raw amino-acid sequence, 268 residues long: 4-hydroxy-tetrahydrodipicolinate reductase (268 aa).

7–12 (GANGRM) contacts NAD(+). R34 lines the NADP(+) pocket. NAD(+) is bound by residues 97-99 (GTT) and 121-124 (SENM). Residue H155 is the Proton donor/acceptor of the active site. H156 provides a ligand contact to (S)-2,3,4,5-tetrahydrodipicolinate. The Proton donor role is filled by K159. 165–166 (GT) is a (S)-2,3,4,5-tetrahydrodipicolinate binding site.

The protein belongs to the DapB family.

It is found in the cytoplasm. It catalyses the reaction (S)-2,3,4,5-tetrahydrodipicolinate + NAD(+) + H2O = (2S,4S)-4-hydroxy-2,3,4,5-tetrahydrodipicolinate + NADH + H(+). The catalysed reaction is (S)-2,3,4,5-tetrahydrodipicolinate + NADP(+) + H2O = (2S,4S)-4-hydroxy-2,3,4,5-tetrahydrodipicolinate + NADPH + H(+). It participates in amino-acid biosynthesis; L-lysine biosynthesis via DAP pathway; (S)-tetrahydrodipicolinate from L-aspartate: step 4/4. Functionally, catalyzes the conversion of 4-hydroxy-tetrahydrodipicolinate (HTPA) to tetrahydrodipicolinate. The protein is 4-hydroxy-tetrahydrodipicolinate reductase of Bartonella bacilliformis (strain ATCC 35685 / KC583 / Herrer 020/F12,63).